Reading from the N-terminus, the 203-residue chain is dTTP/UTP pyrophosphatase (203 aa).

The active-site Proton acceptor is Asp74.

Belongs to the Maf family. YhdE subfamily. Requires a divalent metal cation as cofactor.

It is found in the cytoplasm. The catalysed reaction is dTTP + H2O = dTMP + diphosphate + H(+). It catalyses the reaction UTP + H2O = UMP + diphosphate + H(+). Functionally, nucleoside triphosphate pyrophosphatase that hydrolyzes dTTP and UTP. May have a dual role in cell division arrest and in preventing the incorporation of modified nucleotides into cellular nucleic acids. This chain is dTTP/UTP pyrophosphatase, found in Treponema denticola (strain ATCC 35405 / DSM 14222 / CIP 103919 / JCM 8153 / KCTC 15104).